We begin with the raw amino-acid sequence, 141 residues long: Nucleoside diphosphate kinase (141 aa).

ATP is bound by residues lysine 11, phenylalanine 59, arginine 87, threonine 93, arginine 104, and asparagine 114. Histidine 117 serves as the catalytic Pros-phosphohistidine intermediate.

It belongs to the NDK family. Homotetramer. Mg(2+) serves as cofactor.

The protein resides in the cytoplasm. It catalyses the reaction a 2'-deoxyribonucleoside 5'-diphosphate + ATP = a 2'-deoxyribonucleoside 5'-triphosphate + ADP. The enzyme catalyses a ribonucleoside 5'-diphosphate + ATP = a ribonucleoside 5'-triphosphate + ADP. Its function is as follows. Major role in the synthesis of nucleoside triphosphates other than ATP. The ATP gamma phosphate is transferred to the NDP beta phosphate via a ping-pong mechanism, using a phosphorylated active-site intermediate. The protein is Nucleoside diphosphate kinase of Yersinia enterocolitica serotype O:8 / biotype 1B (strain NCTC 13174 / 8081).